We begin with the raw amino-acid sequence, 116 residues long: Large ribosomal subunit protein bL17 (116 aa).

This sequence belongs to the bacterial ribosomal protein bL17 family. In terms of assembly, part of the 50S ribosomal subunit. Contacts protein L32.

The polypeptide is Large ribosomal subunit protein bL17 (Wolinella succinogenes (strain ATCC 29543 / DSM 1740 / CCUG 13145 / JCM 31913 / LMG 7466 / NCTC 11488 / FDC 602W) (Vibrio succinogenes)).